The chain runs to 230 residues: Flagellar L-ring protein (230 aa).

The signal sequence occupies residues 1-15; that stretch reads MSRLPSLSRPCLAIA. Cys16 carries N-palmitoyl cysteine lipidation. The S-diacylglycerol cysteine moiety is linked to residue Cys16.

This sequence belongs to the FlgH family. The basal body constitutes a major portion of the flagellar organelle and consists of four rings (L,P,S, and M) mounted on a central rod.

The protein resides in the cell outer membrane. The protein localises to the bacterial flagellum basal body. Functionally, assembles around the rod to form the L-ring and probably protects the motor/basal body from shearing forces during rotation. The sequence is that of Flagellar L-ring protein from Xanthomonas axonopodis pv. citri (strain 306).